Reading from the N-terminus, the 196-residue chain is uncharacterized protein (196 aa).

It belongs to the CDP-alcohol phosphatidyltransferase class-I family.

This is an uncharacterized protein from Aquifex aeolicus (strain VF5).